Here is a 472-residue protein sequence, read N- to C-terminus: Coronin-6 (472 aa).

WD repeat units follow at residues 23–64 (QAYE…VLPL), 72–111 (KNYPLVTGHTAPVLDIDWCPHNDNVIASASDDTTIMVWQI), 122–161 (EPIITLEGHSKRVGILSWHPTARNVLLSAGGDNVIIIWNV), 165–204 (EVLLSLDDMHPDVIHSVCWNSNGSLLATTCKDKTLRIIDP), 210–251 (VAEQ…LWDP), and 256–296 (EPVA…YFEI). The segment at 407-433 (KRNILDVRPPSGPRRSQSASDAPLSQQ) is disordered. Over residues 420-433 (RRSQSASDAPLSQQ) the composition is skewed to polar residues. Positions 430 to 464 (LSQQHTLETLLEEIKALRERVQAQEQRITALENML) form a coiled coil.

This chain is Coronin-6 (CORO6), found in Homo sapiens (Human).